Consider the following 398-residue polypeptide: Bone morphogenetic protein 2-B (398 aa).

The signal sequence occupies residues 1 to 23 (MVAGIHSLLLLQFYQILLSGCTG). A propeptide spanning residues 24-284 (LVPEEGKRKY…GHALHKRQKR (261 aa)) is cleaved from the precursor. N-linked (GlcNAc...) asparagine glycosylation is found at N137, N202, N237, and N340. 3 disulfide bridges follow: C298–C363, C327–C395, and C331–C397.

The protein belongs to the TGF-beta family. In terms of assembly, homodimer; disulfide-linked.

Its subcellular location is the secreted. Its function is as follows. Induces cartilage and bone formation. The sequence is that of Bone morphogenetic protein 2-B (bmp2-b) from Xenopus laevis (African clawed frog).